Consider the following 264-residue polypeptide: S-adenosylmethionine decarboxylase proenzyme (264 aa).

The active-site Schiff-base intermediate with substrate; via pyruvic acid is the serine 112. A Pyruvic acid (Ser); by autocatalysis modification is found at serine 112. Histidine 117 serves as the catalytic Proton acceptor; for processing activity. The active-site Proton donor; for catalytic activity is cysteine 140.

Belongs to the prokaryotic AdoMetDC family. Type 2 subfamily. In terms of assembly, heterooctamer of four alpha and four beta chains arranged as a tetramer of alpha/beta heterodimers. The cofactor is pyruvate. Is synthesized initially as an inactive proenzyme. Formation of the active enzyme involves a self-maturation process in which the active site pyruvoyl group is generated from an internal serine residue via an autocatalytic post-translational modification. Two non-identical subunits are generated from the proenzyme in this reaction, and the pyruvate is formed at the N-terminus of the alpha chain, which is derived from the carboxyl end of the proenzyme. The post-translation cleavage follows an unusual pathway, termed non-hydrolytic serinolysis, in which the side chain hydroxyl group of the serine supplies its oxygen atom to form the C-terminus of the beta chain, while the remainder of the serine residue undergoes an oxidative deamination to produce ammonia and the pyruvoyl group blocking the N-terminus of the alpha chain.

The enzyme catalyses S-adenosyl-L-methionine + H(+) = S-adenosyl 3-(methylsulfanyl)propylamine + CO2. It participates in amine and polyamine biosynthesis; S-adenosylmethioninamine biosynthesis; S-adenosylmethioninamine from S-adenosyl-L-methionine: step 1/1. Catalyzes the decarboxylation of S-adenosylmethionine to S-adenosylmethioninamine (dcAdoMet), the propylamine donor required for the synthesis of the polyamines spermine and spermidine from the diamine putrescine. This chain is S-adenosylmethionine decarboxylase proenzyme, found in Yersinia pseudotuberculosis serotype I (strain IP32953).